A 490-amino-acid chain; its full sequence is Probable cytosol aminopeptidase (490 aa).

Mn(2+) is bound by residues lysine 262 and aspartate 267. Residue lysine 274 is part of the active site. Mn(2+) contacts are provided by aspartate 285, aspartate 344, and glutamate 346. The active site involves arginine 348.

It belongs to the peptidase M17 family. Mn(2+) serves as cofactor.

It localises to the cytoplasm. It catalyses the reaction Release of an N-terminal amino acid, Xaa-|-Yaa-, in which Xaa is preferably Leu, but may be other amino acids including Pro although not Arg or Lys, and Yaa may be Pro. Amino acid amides and methyl esters are also readily hydrolyzed, but rates on arylamides are exceedingly low.. The enzyme catalyses Release of an N-terminal amino acid, preferentially leucine, but not glutamic or aspartic acids.. Its function is as follows. Presumably involved in the processing and regular turnover of intracellular proteins. Catalyzes the removal of unsubstituted N-terminal amino acids from various peptides. The polypeptide is Probable cytosol aminopeptidase (Mannheimia succiniciproducens (strain KCTC 0769BP / MBEL55E)).